We begin with the raw amino-acid sequence, 341 residues long: Anthranilate phosphoribosyltransferase (341 aa).

5-phospho-alpha-D-ribose 1-diphosphate is bound by residues G83, 86 to 87, T91, 93 to 96, 111 to 119, and S123; these read GD, NIST, and KHGNRGVSS. Residue G83 coordinates anthranilate. S95 contacts Mg(2+). Anthranilate is bound at residue N114. R169 provides a ligand contact to anthranilate. Mg(2+) contacts are provided by D228 and E229.

It belongs to the anthranilate phosphoribosyltransferase family. In terms of assembly, homodimer. The cofactor is Mg(2+).

It carries out the reaction N-(5-phospho-beta-D-ribosyl)anthranilate + diphosphate = 5-phospho-alpha-D-ribose 1-diphosphate + anthranilate. It participates in amino-acid biosynthesis; L-tryptophan biosynthesis; L-tryptophan from chorismate: step 2/5. Its function is as follows. Catalyzes the transfer of the phosphoribosyl group of 5-phosphorylribose-1-pyrophosphate (PRPP) to anthranilate to yield N-(5'-phosphoribosyl)-anthranilate (PRA). This Cupriavidus necator (strain ATCC 17699 / DSM 428 / KCTC 22496 / NCIMB 10442 / H16 / Stanier 337) (Ralstonia eutropha) protein is Anthranilate phosphoribosyltransferase.